Here is a 263-residue protein sequence, read N- to C-terminus: MINAAVLGACGRMGSLIIENITCSTDMQLVAAFDIGSIGKDAGEFAHVSNLGIQISDVKDLETVLKKTQADVLIDFTAAGATIVNAPIAAGCGVNLIIGTTGLTPEQRKVIDETIQKNKVRAVISPNYSVGVNVFFKIVREAAKYLSDYDIEIIEAHHNQKKDAPSGTALRAADVISEALGGKEYVCGREGIAPRGKEIGIHAVRGGDITGDHTVLFVGNSERIEIRHMAHSRQIFAKGAVRAAEWICKQEPGIYSMDDVLGL.

Residues 8–13 (GACGRM), D34, 99–101 (GTT), and 125–128 (SPNY) contribute to the NAD(+) site. H157 acts as the Proton donor/acceptor in catalysis. Position 158 (H158) interacts with (S)-2,3,4,5-tetrahydrodipicolinate. K161 (proton donor) is an active-site residue. 167 to 168 (GT) is a binding site for (S)-2,3,4,5-tetrahydrodipicolinate.

The protein belongs to the DapB family.

The protein localises to the cytoplasm. It carries out the reaction (S)-2,3,4,5-tetrahydrodipicolinate + NAD(+) + H2O = (2S,4S)-4-hydroxy-2,3,4,5-tetrahydrodipicolinate + NADH + H(+). The enzyme catalyses (S)-2,3,4,5-tetrahydrodipicolinate + NADP(+) + H2O = (2S,4S)-4-hydroxy-2,3,4,5-tetrahydrodipicolinate + NADPH + H(+). It functions in the pathway amino-acid biosynthesis; L-lysine biosynthesis via DAP pathway; (S)-tetrahydrodipicolinate from L-aspartate: step 4/4. Catalyzes the conversion of 4-hydroxy-tetrahydrodipicolinate (HTPA) to tetrahydrodipicolinate. The chain is 4-hydroxy-tetrahydrodipicolinate reductase from Methanosarcina acetivorans (strain ATCC 35395 / DSM 2834 / JCM 12185 / C2A).